A 371-amino-acid chain; its full sequence is 3-dehydroquinate synthase (371 aa).

NAD(+)-binding positions include 70 to 75 (DAEDGK), 104 to 108 (GAVTD), 128 to 129 (TT), Lys141, and Lys150. Zn(2+)-binding residues include Glu183, His246, and His262.

Belongs to the sugar phosphate cyclases superfamily. Dehydroquinate synthase family. It depends on Co(2+) as a cofactor. Requires Zn(2+) as cofactor. The cofactor is NAD(+).

It is found in the cytoplasm. The catalysed reaction is 7-phospho-2-dehydro-3-deoxy-D-arabino-heptonate = 3-dehydroquinate + phosphate. Its pathway is metabolic intermediate biosynthesis; chorismate biosynthesis; chorismate from D-erythrose 4-phosphate and phosphoenolpyruvate: step 2/7. Its function is as follows. Catalyzes the conversion of 3-deoxy-D-arabino-heptulosonate 7-phosphate (DAHP) to dehydroquinate (DHQ). The chain is 3-dehydroquinate synthase from Saccharopolyspora erythraea (strain ATCC 11635 / DSM 40517 / JCM 4748 / NBRC 13426 / NCIMB 8594 / NRRL 2338).